Reading from the N-terminus, the 312-residue chain is Pectinesterase inhibitor 10 (312 aa).

An N-terminal signal peptide occupies residues 1 to 25 (MNILSQTQILHLSIAILLFITTSSS). Low complexity-rich tracts occupy residues 24 to 36 (SSSL…SPSL) and 44 to 55 (SPSSAPPSSLSP). The disordered stretch occupies residues 24-141 (SSSLSPSSSS…PSSSSSTYSN (118 aa)). The span at 56 to 75 (SSPPPLSLSPSSPPPPPPSS) shows a compositional bias: pro residues. Low complexity-rich tracts occupy residues 76 to 85 (SPLSSLSPSL) and 93 to 104 (SPSSAPPSSLSP). A compositionally biased stretch (pro residues) spans 105–124 (SSPPPLSLSPSSPPPPPPSS). The span at 125–137 (SPLSSLSPSSSSS) shows a compositional bias: low complexity. N-linked (GlcNAc...) asparagine glycosylation is found at N141, N153, N185, and N200. Cysteines 152 and 161 form a disulfide. C218 and C268 are disulfide-bonded.

It belongs to the PMEI family.

It localises to the secreted. The protein resides in the extracellular space. Its subcellular location is the apoplast. Pectin methylesterase (PME) inhibitor involved in the maintenance of cell wall integrity in response to necrotrophic pathogens. Modulates PME activity and pectin methylesterification during infection by Botrytis cinerea and contributes to resistance against the pathogen. This is Pectinesterase inhibitor 10 from Arabidopsis thaliana (Mouse-ear cress).